Here is a 148-residue protein sequence, read N- to C-terminus: Putative ankyrin repeat protein RF_1158 (148 aa).

The stretch at 82-115 (RPTTALGIAIAQGNSEEVIKYLLANGADPKLAFD) is one ANK repeat.

This Rickettsia felis (strain ATCC VR-1525 / URRWXCal2) (Rickettsia azadi) protein is Putative ankyrin repeat protein RF_1158.